The chain runs to 119 residues: UPF0212 protein Mlab_0931 (119 aa).

It belongs to the UPF0212 family.

This is UPF0212 protein Mlab_0931 from Methanocorpusculum labreanum (strain ATCC 43576 / DSM 4855 / Z).